Reading from the N-terminus, the 190-residue chain is Probable nicotinate-nucleotide adenylyltransferase (190 aa).

Belongs to the NadD family.

It carries out the reaction nicotinate beta-D-ribonucleotide + ATP + H(+) = deamido-NAD(+) + diphosphate. Its pathway is cofactor biosynthesis; NAD(+) biosynthesis; deamido-NAD(+) from nicotinate D-ribonucleotide: step 1/1. Functionally, catalyzes the reversible adenylation of nicotinate mononucleotide (NaMN) to nicotinic acid adenine dinucleotide (NaAD). This chain is Probable nicotinate-nucleotide adenylyltransferase, found in Frankia alni (strain DSM 45986 / CECT 9034 / ACN14a).